Reading from the N-terminus, the 749-residue chain is MEVVPAEVNSLLPDDIMDTAITLVDEDSIEAVIVSSPIPMETELEEIVSINSTGDSTATPISTEPITVYSNHTNQVAVNTTVSKADSNTTVKPAFPSGLQKLGAQTPVTISANQIILNKVSQTSDLKLGNQTLKPDGQKLILTTLGKSGSPIVLALPHSQLPQAQKVTAQAQPGDAKLPPQQIKVVTIGGRPEVKPAIGVSALTPGSQLINTTTQPSVLQTQQLKTVQIAKKPRTPTSGPVITKLIFAKPINSKAVTGQTTQASPPVVTGRVLSQSAPGTPSKTITISESGVIGSTLNSTTQTPNKIAISPLKSPNKTVKSAVQTITVGGMSTSQFKTIIPLAAAPNVQPIQVPGSKFHYVRLVTATTAGSSAPPVSQSPSVNTQPLQQAKPVVVNTTPVRMSVPFVQAQAVKQVVPKPINSTSQIVTTSQPQQRLIMPATPLPQIQPNLTNLPPGTVLAPAPGTGNVGYAVLPAQYVTQLQQSSYVSIAGNSNFTGTSGIQTQARVSFNGIIPSESASRPRKPCNCTKSLCLKLYCDCFANGEFCNNCNCTNCYNNLEHENERQKAIKACLDRNPEAFKPKIGKGKEGESDRRHSKGCNCKRSGCLKNYCECYEAKIMCSSICKCIGCKNFEESPERKTLMHLADAAEVRVQQQTAAKTKLSSQISDLLTRPTPALNSGGGKLPFTFVTKEVAEATCNCLLAQAEQADKKGKSKAAAERMILEEFGRCLMSVINSAGKAKSDPCAMHC.

Lysine 139 participates in a covalent cross-link: Glycyl lysine isopeptide (Lys-Gly) (interchain with G-Cter in SUMO2). Lysine 244 and lysine 249 each carry N6-acetyllysine. Phosphoserine is present on residues serine 264, serine 282, serine 310, and serine 314. A Glycyl lysine isopeptide (Lys-Gly) (interchain with G-Cter in SUMO2) cross-link involves residue lysine 357. Residues proline 521–glutamate 634 form the CRC domain. A DNA-binding region spans residues lysine 523 to tyrosine 536. Zn(2+) is bound by residues cysteine 525, cysteine 527, cysteine 532, cysteine 537, cysteine 539, cysteine 546, cysteine 549, cysteine 551, and cysteine 554. The segment at isoleucine 583 to serine 596 is linker. Zn(2+) contacts are provided by cysteine 599, cysteine 601, cysteine 606, cysteine 611, cysteine 613, cysteine 620, cysteine 624, cysteine 626, and cysteine 629. The tract at residues cysteine 599 to glutamate 612 is DNA-binding. Serine 635 carries the phosphoserine modification. Residues lysine 639, lysine 659, and lysine 661 each participate in a glycyl lysine isopeptide (Lys-Gly) (interchain with G-Cter in SUMO2) cross-link.

This sequence belongs to the lin-54 family. In terms of assembly, component of the DREAM complex (also named LINC complex) at least composed of E2F4, E2F5, LIN9, LIN37, LIN52, LIN54, MYBL1, MYBL2, RBL1, RBL2, RBBP4, RBL2, TFDP1 and TFDP2. The complex exists in quiescent cells where it represses cell cycle-dependent genes. It dissociates in S phase when LIN9, LIN37, LIN52 and LIN54 form a subcomplex that binds to MYBL2.

It localises to the nucleus. Functionally, component of the DREAM complex, a multiprotein complex that can both act as a transcription activator or repressor depending on the context. In G0 phase, the complex binds to more than 800 promoters and is required for repression of E2F target genes. In S phase, the complex selectively binds to the promoters of G2/M genes whose products are required for mitosis and participates in their cell cycle dependent activation. In the complex, acts as a DNA-binding protein that binds the promoter of CDK1 in a sequence-specific manner. Specifically recognizes the consensus motif 5'-TTYRAA-3' in target DNA. This Rattus norvegicus (Rat) protein is Protein lin-54 homolog (Lin54).